The chain runs to 215 residues: Ras-related protein Rab-42 (215 aa).

Positions 19, 21, 22, 23, and 44 each coordinate GTP. Mg(2+) contacts are provided by T23, T44, and D68. GTP is bound by residues G71, K128, D130, A157, and K158. Residues 196 to 215 (HRSPNPRSSSRKQDSGTCQC) form a disordered region. Residues C213 and C215 are each lipidated (S-geranylgeranyl cysteine).

Belongs to the small GTPase superfamily. Rab family. It depends on Mg(2+) as a cofactor.

It is found in the membrane. The catalysed reaction is GTP + H2O = GDP + phosphate + H(+). With respect to regulation, regulated by guanine nucleotide exchange factors (GEFs) which promote the exchange of bound GDP for free GTP. Regulated by GTPase activating proteins (GAPs) which increase the GTP hydrolysis activity. Inhibited by GDP dissociation inhibitors (GDIs). Functionally, the small GTPases Rab are key regulators of intracellular membrane trafficking, from the formation of transport vesicles to their fusion with membranes. Rabs cycle between an inactive GDP-bound form and an active GTP-bound form that is able to recruit to membranes different sets of downstream effectors directly responsible for vesicle formation, movement, tethering and fusion. The physiological function of RAB42 remains undefined. The sequence is that of Ras-related protein Rab-42 from Mus musculus (Mouse).